A 975-amino-acid polypeptide reads, in one-letter code: Probable outer membrane protein PmpA (975 aa).

An N-terminal signal peptide occupies residues Met-1–Ala-51. An Autotransporter domain is found at Arg-699–Phe-975.

It belongs to the PMP outer membrane protein family.

It localises to the secreted. The protein localises to the cell wall. The protein resides in the cell outer membrane. This is Probable outer membrane protein PmpA (pmpA) from Chlamydia trachomatis serovar D (strain ATCC VR-885 / DSM 19411 / UW-3/Cx).